The primary structure comprises 277 residues: Diaminopimelate epimerase (277 aa).

Substrate is bound by residues Asn13, Gln46, and Asn66. Residue Cys75 is the Proton donor of the active site. Residues 76–77 (GN), Asn160, Asn193, and 211–212 (ER) each bind substrate. Catalysis depends on Cys220, which acts as the Proton acceptor. Residue 221-222 (GS) participates in substrate binding.

This sequence belongs to the diaminopimelate epimerase family. As to quaternary structure, homodimer.

It is found in the cytoplasm. The enzyme catalyses (2S,6S)-2,6-diaminopimelate = meso-2,6-diaminopimelate. It functions in the pathway amino-acid biosynthesis; L-lysine biosynthesis via DAP pathway; DL-2,6-diaminopimelate from LL-2,6-diaminopimelate: step 1/1. Its function is as follows. Catalyzes the stereoinversion of LL-2,6-diaminopimelate (L,L-DAP) to meso-diaminopimelate (meso-DAP), a precursor of L-lysine and an essential component of the bacterial peptidoglycan. This chain is Diaminopimelate epimerase, found in Legionella pneumophila (strain Paris).